The following is a 247-amino-acid chain: ATP synthase subunit a, chloroplastic (247 aa).

5 consecutive transmembrane segments (helical) span residues 38–58 (QVLI…TLAV), 95–115 (VPFI…GALL), 134–154 (INTT…AGLS), 199–219 (LVVV…VMFL), and 220–240 (GLFT…AYIG).

Belongs to the ATPase A chain family. F-type ATPases have 2 components, CF(1) - the catalytic core - and CF(0) - the membrane proton channel. CF(1) has five subunits: alpha(3), beta(3), gamma(1), delta(1), epsilon(1). CF(0) has four main subunits: a, b, b' and c.

It localises to the plastid. It is found in the chloroplast thylakoid membrane. Functionally, key component of the proton channel; it plays a direct role in the translocation of protons across the membrane. This chain is ATP synthase subunit a, chloroplastic, found in Lemna minor (Common duckweed).